The following is a 296-amino-acid chain: Malonyl-[acyl-carrier protein] O-methyltransferase (296 aa).

Belongs to the methyltransferase superfamily.

The catalysed reaction is malonyl-[ACP] + S-adenosyl-L-methionine = malonyl-[ACP] methyl ester + S-adenosyl-L-homocysteine. The protein operates within cofactor biosynthesis; biotin biosynthesis. Converts the free carboxyl group of a malonyl-thioester to its methyl ester by transfer of a methyl group from S-adenosyl-L-methionine (SAM). It allows to synthesize pimeloyl-ACP via the fatty acid synthetic pathway. In Methylovorus sp. (strain MP688), this protein is Malonyl-[acyl-carrier protein] O-methyltransferase.